The sequence spans 594 residues: Putative phospholipase B-like 2 (594 aa).

Positions 1–46 (MAAPVDGSSGGWAARALRRALALTSLTTLALLASLTGLLLSGPAGA) are cleaved as a signal peptide. Asn-93 and Asn-115 each carry an N-linked (GlcNAc...) asparagine glycan. The cysteines at positions 147 and 157 are disulfide-linked. Residues Asn-236 and Asn-441 are each glycosylated (N-linked (GlcNAc...) asparagine). The cysteines at positions 497 and 500 are disulfide-linked. Asn-520 carries N-linked (GlcNAc...) asparagine glycosylation.

It belongs to the phospholipase B-like family. As to quaternary structure, interacts with IGF2R. In terms of processing, the p76 protein is synthesized as a 76 kDa precursor which is then processed into a N-terminal 28 kDa form and a C-terminal 40 kDa form. The C-terminal peptide is further processed into a 15 kDa form. Glycosylated; contains mannose 6-phosphate sugars. As to expression, present at highest levels in spleen, lung and brain (at protein level).

The protein resides in the lysosome lumen. Its function is as follows. Putative phospholipase. The sequence is that of Putative phospholipase B-like 2 (Plbd2) from Mus musculus (Mouse).